A 316-amino-acid polypeptide reads, in one-letter code: Glutathione synthetase (316 aa).

The region spanning Lys125–Glu310 is the ATP-grasp domain. Arg256 carries an N-beta-linked (GlcNAc) arginine glycan. Mg(2+) is bound by residues Glu281 and Asn283.

Belongs to the prokaryotic GSH synthase family. Mg(2+) serves as cofactor. The cofactor is Mn(2+).

The catalysed reaction is gamma-L-glutamyl-L-cysteine + glycine + ATP = glutathione + ADP + phosphate + H(+). The protein operates within sulfur metabolism; glutathione biosynthesis; glutathione from L-cysteine and L-glutamate: step 2/2. This Escherichia coli O127:H6 (strain E2348/69 / EPEC) protein is Glutathione synthetase.